The chain runs to 329 residues: Trans-1,2-dihydrobenzene-1,2-diol dehydrogenase (329 aa).

The protein belongs to the Gfo/Idh/MocA family. As to quaternary structure, homodimer. In terms of tissue distribution, lens, liver and small intestine.

The enzyme catalyses (1R,2R)-1,2-dihydrobenzene-1,2-diol + NADP(+) = catechol + NADPH + H(+). It carries out the reaction D-xylose + NADP(+) = D-xylono-1,5-lactone + NADPH + H(+). Its activity is regulated as follows. Stimulated by various salts. The polypeptide is Trans-1,2-dihydrobenzene-1,2-diol dehydrogenase (DHDH) (Oryctolagus cuniculus (Rabbit)).